Consider the following 624-residue polypeptide: (-)-beta-phellandrene synthase 2, chloroplastic (624 aa).

The N-terminal 48 residues, 1–48 (MAIVSSVPLASKSCLHKSLISSIHKLKPFCRTIPTLGMSRPGKYVMPS), are a transit peptide targeting the chloroplast. D375, D379, and D527 together coordinate Mg(2+). Residues 375-379 (DDMYD) carry the DDXXD motif motif.

The protein belongs to the terpene synthase family. Tpsd subfamily. Mg(2+) is required as a cofactor. The cofactor is Mn(2+).

The protein resides in the plastid. Its subcellular location is the chloroplast. The enzyme catalyses (2E)-geranyl diphosphate = (-)-beta-phellandrene + diphosphate. It functions in the pathway terpene metabolism; oleoresin biosynthesis. Functionally, terpene synthase (TPS) involved in the biosynthesis of monoterpene natural products included in conifer oleoresin secretions and volatile emissions; these compounds contribute to biotic and abiotic stress defense against herbivores and pathogens. Catalyzes the conversion of (2E)-geranyl diphosphate (GPP) to (-)-beta-phellandrene. The protein is (-)-beta-phellandrene synthase 2, chloroplastic of Picea sitchensis (Sitka spruce).